The chain runs to 82 residues: Immediate early response 3-interacting protein 1 (82 aa).

Transmembrane regions (helical) follow at residues A2–L22 and V62–G82.

It belongs to the YOS1 family.

It localises to the endoplasmic reticulum membrane. Its function is as follows. Regulator of endoplasmic reticulum secretion that acts as a key determinant of brain size. Required for secretion of extracellular matrix proteins. Required for correct brain development by depositing sufficient extracellular matrix proteins for tissue integrity and the proliferation of neural progenitors. Acts as a regulator of the unfolded protein response (UPR). This chain is Immediate early response 3-interacting protein 1, found in Danio rerio (Zebrafish).